The primary structure comprises 200 residues: Glycosyl hydrolase family 19 domain-containing protein HI_1415 (200 aa).

It belongs to the glycosyl hydrolase 19 family.

This chain is Glycosyl hydrolase family 19 domain-containing protein HI_1415, found in Haemophilus influenzae (strain ATCC 51907 / DSM 11121 / KW20 / Rd).